The following is a 383-amino-acid chain: F-box/kelch-repeat protein At2g29830 (383 aa).

The disordered stretch occupies residues 1–21; that stretch reads MVVLSEIPGDPNEDNQNENPQ. Over residues 11–21 the composition is skewed to acidic residues; sequence PNEDNQNENPQ. Positions 27–73 constitute an F-box domain; that stretch reads LPILLQLPEELIASIVALIPRCHYPSLSLVSRAFRHLITSQELYVAR. Kelch repeat units lie at residues 130-178, 179-224, 226-272, 274-317, and 324-370; these read KMYV…IIDG, RIYV…FITY, VMQG…VVGD, LYAL…YTST, and KLVI…RDLP.

The sequence is that of F-box/kelch-repeat protein At2g29830 from Arabidopsis thaliana (Mouse-ear cress).